A 335-amino-acid chain; its full sequence is Phenylalanine--tRNA ligase alpha subunit (335 aa).

Glu-262 serves as a coordination point for Mg(2+).

This sequence belongs to the class-II aminoacyl-tRNA synthetase family. Phe-tRNA synthetase alpha subunit type 1 subfamily. As to quaternary structure, tetramer of two alpha and two beta subunits. Mg(2+) is required as a cofactor.

Its subcellular location is the cytoplasm. It catalyses the reaction tRNA(Phe) + L-phenylalanine + ATP = L-phenylalanyl-tRNA(Phe) + AMP + diphosphate + H(+). In Prochlorococcus marinus subsp. pastoris (strain CCMP1986 / NIES-2087 / MED4), this protein is Phenylalanine--tRNA ligase alpha subunit.